Reading from the N-terminus, the 1084-residue chain is Ribonucleoside-diphosphate reductase NrdEB subunit alpha (1084 aa).

Residues Thr-152, 168-169 (SC), and Gly-197 each bind substrate. The cysteines at positions 169 and 793 are disulfide-linked. Asn-379 serves as the catalytic Proton acceptor. Residue Cys-381 is the Cysteine radical intermediate of the active site. The 152-residue stretch at 503–654 (IMGIIAGDGT…VQKLLLNMGV (152 aa)) folds into the DOD-type homing endonuclease domain. Glu-768 (proton acceptor) is an active-site residue. 964 to 968 (PTGSI) contacts substrate.

This sequence belongs to the ribonucleoside diphosphate reductase large chain family. Tetramer of two alpha and two beta subunits. This protein undergoes protein self-splicing that involves post-translational excision of the intervening region (intein) followed by peptide ligation.

It catalyses the reaction a 2'-deoxyribonucleoside 5'-diphosphate + [thioredoxin]-disulfide + H2O = a ribonucleoside 5'-diphosphate + [thioredoxin]-dithiol. With respect to regulation, under complex allosteric control mediated by deoxynucleoside triphosphates and ATP binding. The type of nucleotide bound at the specificity site determines substrate preference. It seems probable that ATP makes the enzyme reduce CDP and UDP, dGTP favors ADP reduction and dTTP favors GDP reduction. Functionally, provides the precursors necessary for DNA synthesis. Catalyzes the biosynthesis of deoxyribonucleotides from the corresponding ribonucleotides. This chain is Ribonucleoside-diphosphate reductase NrdEB subunit alpha (nrdEB), found in Bacillus subtilis (strain 168).